Consider the following 249-residue polypeptide: Glutathione S-transferase S1 (249 aa).

Residues M1–P38 are compositionally biased toward low complexity. The interval M1–P42 is disordered. In terms of domain architecture, GST N-terminal spans H48–G125. Glutathione is bound by residues Y54, W85, K89, Q96–M97, and Q109–S110. The GST C-terminal domain occupies T127–V249.

This sequence belongs to the GST superfamily. Sigma family. Homodimer.

It catalyses the reaction RX + glutathione = an S-substituted glutathione + a halide anion + H(+). Functionally, conjugation of reduced glutathione to a wide number of exogenous and endogenous hydrophobic electrophiles. May be involved in the detoxification of metabolites produced during cellular division and morphogenesis. The sequence is that of Glutathione S-transferase S1 from Drosophila melanogaster (Fruit fly).